Reading from the N-terminus, the 427-residue chain is Serine--tRNA ligase (427 aa).

Threonine 236–glutamate 238 contributes to the L-serine binding site. Arginine 267–glutamate 269 lines the ATP pocket. Glutamate 290 is an L-serine binding site. Glutamate 354–serine 357 is a binding site for ATP. Serine 388 is a binding site for L-serine.

This sequence belongs to the class-II aminoacyl-tRNA synthetase family. Type-1 seryl-tRNA synthetase subfamily. In terms of assembly, homodimer. The tRNA molecule binds across the dimer.

The protein localises to the cytoplasm. The enzyme catalyses tRNA(Ser) + L-serine + ATP = L-seryl-tRNA(Ser) + AMP + diphosphate + H(+). It carries out the reaction tRNA(Sec) + L-serine + ATP = L-seryl-tRNA(Sec) + AMP + diphosphate + H(+). Its pathway is aminoacyl-tRNA biosynthesis; selenocysteinyl-tRNA(Sec) biosynthesis; L-seryl-tRNA(Sec) from L-serine and tRNA(Sec): step 1/1. Its function is as follows. Catalyzes the attachment of serine to tRNA(Ser). Is also able to aminoacylate tRNA(Sec) with serine, to form the misacylated tRNA L-seryl-tRNA(Sec), which will be further converted into selenocysteinyl-tRNA(Sec). This is Serine--tRNA ligase from Psychrobacter arcticus (strain DSM 17307 / VKM B-2377 / 273-4).